The primary structure comprises 555 residues: MDVSSEHTKDPGGEGGDGESLAARPSKIKASSGPPTSPEPGELESEPEEEEEEQAASQGGTAADEQAEAPKGLTAAEAAGEEGPGEPGRPAEPQPEPEEPAEVGAEEPAQPEPGAGPEELEAEAGAEELEQAAEGKEVRFQASLPLTRIDEEEAAAAPEAETERVEGEEEDKEETQRDGAESKERDGEGRPAKSQEEGKRLYGRDEFEDLEWSEEVQKLQEQQLRSDLLDQYRSLLVERNRSQRYNLYLQHKIFEALRRKKGLEAAEVADRGAEAEAPEKEQAYLRHLGMLEELKKQQADDLQWYHQELGQLKRQCQEKLTRVEKEWRRFQALKKQVVMQAMGSCRMRGGRQAALREVEQIQALEDKKEKEMSAVRLENIQLKQSLVHFETRMRTQEDLTQGLLLIDFEQLKIENQTFNEKIEERNEELLKLRSKVTNSVQVITHVKEKLHFMDMENACKKTQLAEIEAQAALGRDILTKTKQAREGLRTDNIRLNQKCGLLGKDSLLRDLEEKVDKTELLHRRLESLKRHHASLTLSCRGVRQKIREAKAFLPS.

Basic and acidic residues predominate over residues 1-12; that stretch reads MDVSSEHTKDPG. Residues 1–202 form a disordered region; the sequence is MDVSSEHTKD…KSQEEGKRLY (202 aa). Acidic residues-rich tracts occupy residues 41–54 and 95–105; these read GELESEPEEEEEEQ and PEPEEPAEVGA. Positions 106 to 117 are enriched in low complexity; the sequence is EEPAQPEPGAGP. Over residues 118–131 the composition is skewed to acidic residues; the sequence is EELEAEAGAEELEQ. Residues 174–202 show a composition bias toward basic and acidic residues; sequence ETQRDGAESKERDGEGRPAKSQEEGKRLY. 2 coiled-coil regions span residues 305–441 and 505–531; these read YHQE…NSVQ and DSLLRDLEEKVDKTELLHRRLESLKRH.

Belongs to the CFAP184 family. Forms a complex with CFAP263; the interaction is required for functional activity in cilia.

The protein resides in the cell projection. Its subcellular location is the cilium. It localises to the cytoplasm. The protein localises to the cytoskeleton. It is found in the microtubule organizing center. The protein resides in the centrosome. In complex with CFAP263, acts as a regulator of ciliary beating that connects radial spoke 3 (RS3) to the inner dynein arm (IDA) and the nexin-dynein regulatory complex (N-DRC). The complex is positioned parallel to N-DRC and forms a connection between the arch at the base of RS3, the IDA tail and N-DRC. This chain is Cilia- and flagella-associated protein 184, found in Homo sapiens (Human).